The following is a 412-amino-acid chain: Glucose/galactose transporter (412 aa).

Helical transmembrane passes span 21 to 41 (YGFA…ITCL), 62 to 82 (LIQF…GQLV), 90 to 110 (GIVV…PAAS), 113 to 133 (VYAL…ILQV), 158 to 178 (FNSL…LSAA), 192 to 212 (FPYL…AILK), 239 to 259 (LGAI…SFLV), 310 to 330 (AFVA…IAMW), 331 to 351 (SVLA…SLAL), 363 to 383 (GILC…GALA), and 388 to 408 (IHLA…YGLI).

This sequence belongs to the major facilitator superfamily. FHS transporter (TC 2.A.1.7) family.

It is found in the cell inner membrane. Its function is as follows. Intake of glucose and galactose. This chain is Glucose/galactose transporter (gluP), found in Brucella abortus (strain 2308).